The chain runs to 455 residues: Alcohol acyl transferase 1 allele GSb (455 aa).

Residues histidine 164 and asparagine 385 each act as proton acceptor in the active site.

This sequence belongs to the plant acyltransferase family. Expressed at very low levels in the skin of ripe fruit.

In terms of biological role, involved in the biosynthesis of volatile esters which confer ripe apple fruit flavor. Alcohol acyl transferase that can use a wide range of alcohols as substrate to produce esters. This Malus domestica (Apple) protein is Alcohol acyl transferase 1 allele GSb.